Consider the following 215-residue polypeptide: FMN-dependent NADH:quinone oxidoreductase 1 (215 aa).

The protein belongs to the azoreductase type 1 family. As to quaternary structure, homodimer. FMN is required as a cofactor.

The catalysed reaction is 2 a quinone + NADH + H(+) = 2 a 1,4-benzosemiquinone + NAD(+). The enzyme catalyses N,N-dimethyl-1,4-phenylenediamine + anthranilate + 2 NAD(+) = 2-(4-dimethylaminophenyl)diazenylbenzoate + 2 NADH + 2 H(+). Functionally, quinone reductase that provides resistance to thiol-specific stress caused by electrophilic quinones. Its function is as follows. Also exhibits azoreductase activity. Catalyzes the reductive cleavage of the azo bond in aromatic azo compounds to the corresponding amines. This Lactiplantibacillus plantarum (strain ATCC BAA-793 / NCIMB 8826 / WCFS1) (Lactobacillus plantarum) protein is FMN-dependent NADH:quinone oxidoreductase 1.